The chain runs to 154 residues: Probable archaeosortase D (154 aa).

The next 4 helical transmembrane spans lie at 6–26 (AIYI…LKML), 57–77 (IIEI…LGYI), 91–111 (YSVF…ILII), and 125–145 (VISF…IYLL). The active-site Acyl-thioester intermediate is the cysteine 64. Catalysis depends on arginine 106, which acts as the Proton donor.

Belongs to the exosortase/archaeosortase family. Archaeosortase D subfamily.

The protein resides in the cell membrane. Its function is as follows. Transpeptidase that recognizes and modifies its substrate by proteolytic cleavage of a sorting signal. Following cleavage, a covalent intermediate is formed via a thioester bond between the archaeosortase and its substrate, which is then transferred and covalently attached to the cell membrane. This chain is Probable archaeosortase D, found in Methanocaldococcus jannaschii (strain ATCC 43067 / DSM 2661 / JAL-1 / JCM 10045 / NBRC 100440) (Methanococcus jannaschii).